The sequence spans 61 residues: Large ribosomal subunit protein bL32 (61 aa).

The segment at 1 to 44 is disordered; sequence MAVQQNRKSRSRRDMRRSHDALTENALTVDQTTGETHRRHHVTK. Residues 7–16 show a composition bias toward basic residues; the sequence is RKSRSRRDMR. The segment covering 25–34 has biased composition (polar residues); that stretch reads NALTVDQTTG.

Belongs to the bacterial ribosomal protein bL32 family.

The polypeptide is Large ribosomal subunit protein bL32 (Acinetobacter baylyi (strain ATCC 33305 / BD413 / ADP1)).